The following is a 460-amino-acid chain: MEAICSSLEPLFPCREAAIETLGELIGDSSETYPSAIYLFGHSGTGKTALTRAFLKECGKRQNVRTAHLNAIECYTTKIMLEILLDSLAPDQGDALKVDNMLDFVEQLRRQAATRVEDQGFLIAVDNAERLRDMDANVLPVLLRLQELTNLNLCVILLSQLPFEKFYNKTGLSEIVCLHLAQYNKAETQRILGSDFQQVRNQLLEQFAQDKKRLEICQEAVTEDFYNNYLNLFLSVFYKACRDVPELQLTARKCLSTYLEPVLDGTVDATDISRLWRHIAGPLRSALTQIYMRIEKPAEEVEDFTAIEDQSVRKLAQSLELPYYAKFLLIAAFLASHNAAKQDKRLFVKHHGKQRKRMQTVNARAKTTEKMSTTLGPKSFSIDRLLAIFYAILEEKVGLTCNLLSQISTLVHLNLLSFVSGEQNIMEGSARLQCTIGLEFVLQIGKVVGFNVRQYLCDFM.

41 to 48 is a binding site for ATP; that stretch reads GHSGTGKT.

Belongs to the ORC5 family. In terms of assembly, ORC is composed of six subunits.

It localises to the nucleus. Functionally, component of the origin recognition complex (ORC) that binds origins of replication. DNA-binding is ATP-dependent, however specific DNA sequences that define origins of replication have not been identified so far. ORC is required to assemble the pre-replication complex necessary to initiate DNA replication. The protein is Origin recognition complex subunit 5 (Orc5) of Drosophila melanogaster (Fruit fly).